The following is a 345-amino-acid chain: N-acetyl-gamma-glutamyl-phosphate reductase (345 aa).

Cysteine 142 is a catalytic residue.

Belongs to the NAGSA dehydrogenase family. Type 1 subfamily.

The protein localises to the cytoplasm. The catalysed reaction is N-acetyl-L-glutamate 5-semialdehyde + phosphate + NADP(+) = N-acetyl-L-glutamyl 5-phosphate + NADPH + H(+). It participates in amino-acid biosynthesis; L-arginine biosynthesis; N(2)-acetyl-L-ornithine from L-glutamate: step 3/4. Functionally, catalyzes the NADPH-dependent reduction of N-acetyl-5-glutamyl phosphate to yield N-acetyl-L-glutamate 5-semialdehyde. The protein is N-acetyl-gamma-glutamyl-phosphate reductase of Thermus thermophilus (strain ATCC BAA-163 / DSM 7039 / HB27).